Consider the following 66-residue polypeptide: Large ribosomal subunit protein bL35 (66 aa).

A compositionally biased stretch (basic residues) spans 1-15 (MSKMKTKSGAKKRFK). A disordered region spans residues 1–35 (MSKMKTKSGAKKRFKLTASGKVKAGQAGKRHGMIK).

Belongs to the bacterial ribosomal protein bL35 family.

This is Large ribosomal subunit protein bL35 from Maricaulis maris (strain MCS10) (Caulobacter maris).